The primary structure comprises 83 residues: Short neurotoxin 1 (83 aa).

Positions 1–21 (MKTLLLTLVVVTIVCLDLGYT) are cleaved as a signal peptide. 4 cysteine pairs are disulfide-bonded: cysteine 24–cysteine 45, cysteine 38–cysteine 62, cysteine 64–cysteine 75, and cysteine 76–cysteine 81.

It belongs to the three-finger toxin family. Short-chain subfamily. Type I alpha-neurotoxin sub-subfamily. In terms of tissue distribution, expressed by the venom gland.

The protein resides in the secreted. In terms of biological role, binds to muscle nicotinic acetylcholine receptor (nAChR) and inhibit acetylcholine from binding to the receptor, thereby impairing neuromuscular transmission. In Pseudechis australis (Mulga snake), this protein is Short neurotoxin 1.